A 432-amino-acid chain; its full sequence is Adenylosuccinate synthetase (432 aa).

Residues 12 to 18 (GDEGKGK) and 40 to 42 (GHT) each bind GTP. The Proton acceptor role is filled by D13. Mg(2+)-binding residues include D13 and G40. IMP is bound by residues 13–16 (DEGK), 38–41 (NAGH), T132, R146, Q226, T241, and R305. H41 acts as the Proton donor in catalysis. Residue 301–307 (TVTGRKR) coordinates substrate. GTP-binding positions include R307, 333 to 335 (KLD), and 415 to 417 (STS).

The protein belongs to the adenylosuccinate synthetase family. In terms of assembly, homodimer. Mg(2+) is required as a cofactor.

The protein resides in the cytoplasm. It catalyses the reaction IMP + L-aspartate + GTP = N(6)-(1,2-dicarboxyethyl)-AMP + GDP + phosphate + 2 H(+). The protein operates within purine metabolism; AMP biosynthesis via de novo pathway; AMP from IMP: step 1/2. In terms of biological role, plays an important role in the de novo pathway of purine nucleotide biosynthesis. Catalyzes the first committed step in the biosynthesis of AMP from IMP. The chain is Adenylosuccinate synthetase from Sinorhizobium medicae (strain WSM419) (Ensifer medicae).